Here is an 834-residue protein sequence, read N- to C-terminus: Serine/threonine-protein kinase TNNI3K (834 aa).

A lipid anchor (N-myristoyl glycine) is attached at G2. Residues 21–49 (SESYAIIIERLEDDLQIKENEFQELRHIF) adopt a coiled-coil conformation. ANK repeat units lie at residues 66-96 (RGLS…RPSR), 100-129 (NGFP…DVQQ), 133-162 (GGLT…NVNV), 166-195 (VFFT…DVNV), 199-229 (VGDR…DVNA), 233-262 (EDHV…EVQP), 268-297 (YGDT…TESL), 303-334 (FSET…NINH), 338-367 (DGHT…DMNL), and 380-409 (DEQT…PQDE). One can recognise a Protein kinase domain in the interval 462–722 (IEFHEIIGSG…EVVRKLEECL (261 aa)). ATP contacts are provided by residues 468 to 476 (IGSGSFGKV) and K489. D587 functions as the Proton acceptor in the catalytic mechanism. Residues 815-834 (PMSPMHLHSRRNSGSFEDGN) form a disordered region.

Belongs to the protein kinase superfamily. TKL Ser/Thr protein kinase family. MAP kinase kinase kinase subfamily. As to quaternary structure, interacts with TNNI3, ACTC, ACTA1, MYBPC3, AIP, FABP3 and HADHB. The cofactor is Mg(2+). In terms of processing, autophosphorylated.

The protein localises to the nucleus. It is found in the cytoplasm. It catalyses the reaction L-seryl-[protein] + ATP = O-phospho-L-seryl-[protein] + ADP + H(+). The catalysed reaction is L-threonyl-[protein] + ATP = O-phospho-L-threonyl-[protein] + ADP + H(+). In terms of biological role, may play a role in cardiac physiology. The chain is Serine/threonine-protein kinase TNNI3K from Mus musculus (Mouse).